The following is a 219-amino-acid chain: Imidazole glycerol phosphate synthase subunit HisH (219 aa).

The region spanning 4 to 216 is the Glutamine amidotransferase type-1 domain; the sequence is TVTVLDYGSG…VDSLPATGRN (213 aa). Residue cysteine 82 is the Nucleophile of the active site. Residues histidine 191 and glutamate 193 contribute to the active site.

In terms of assembly, heterodimer of HisH and HisF.

It localises to the cytoplasm. The enzyme catalyses 5-[(5-phospho-1-deoxy-D-ribulos-1-ylimino)methylamino]-1-(5-phospho-beta-D-ribosyl)imidazole-4-carboxamide + L-glutamine = D-erythro-1-(imidazol-4-yl)glycerol 3-phosphate + 5-amino-1-(5-phospho-beta-D-ribosyl)imidazole-4-carboxamide + L-glutamate + H(+). It catalyses the reaction L-glutamine + H2O = L-glutamate + NH4(+). It functions in the pathway amino-acid biosynthesis; L-histidine biosynthesis; L-histidine from 5-phospho-alpha-D-ribose 1-diphosphate: step 5/9. Functionally, IGPS catalyzes the conversion of PRFAR and glutamine to IGP, AICAR and glutamate. The HisH subunit catalyzes the hydrolysis of glutamine to glutamate and ammonia as part of the synthesis of IGP and AICAR. The resulting ammonia molecule is channeled to the active site of HisF. The sequence is that of Imidazole glycerol phosphate synthase subunit HisH from Renibacterium salmoninarum (strain ATCC 33209 / DSM 20767 / JCM 11484 / NBRC 15589 / NCIMB 2235).